Here is a 261-residue protein sequence, read N- to C-terminus: Small ribosomal subunit protein uS2 (261 aa).

Ser-2 is modified (N-acetylserine). The interval 212-261 (QNAAEEAKAEETEEAPAAEAETEWTGETDDVDWADSGATPAAEDAAASNW) is disordered. Acidic residues predominate over residues 222 to 244 (ETEEAPAAEAETEWTGETDDVDW).

Belongs to the universal ribosomal protein uS2 family. Component of the small ribosomal subunit. Mature ribosomes consist of a small (40S) and a large (60S) subunit. The 40S subunit contains about 33 different proteins and 1 molecule of RNA (18S). The 60S subunit contains about 49 different proteins and 3 molecules of RNA (25S, 5.8S and 5S). Interacts with RPS21.

It localises to the cytoplasm. Functionally, required for the assembly and/or stability of the 40S ribosomal subunit. Required for the processing of the 20S rRNA-precursor to mature 18S rRNA in a late step of the maturation of 40S ribosomal subunits. This Candida tropicalis (Yeast) protein is Small ribosomal subunit protein uS2.